The sequence spans 226 residues: PKHD-type hydroxylase PSPA7_5129 (226 aa).

Residues 78–178 enclose the Fe2OG dioxygenase domain; it reads KVFPPLFNCY…RYASFFWTQS (101 aa). Fe cation-binding residues include His96, Asp98, and His159. Arg169 provides a ligand contact to 2-oxoglutarate.

Fe(2+) serves as cofactor. L-ascorbate is required as a cofactor.

This chain is PKHD-type hydroxylase PSPA7_5129, found in Pseudomonas paraeruginosa (strain DSM 24068 / PA7) (Pseudomonas aeruginosa (strain PA7)).